The chain runs to 744 residues: Integrator complex subunit 11 homolog (744 aa).

Zn(2+) contacts are provided by histidine 67, histidine 69, aspartate 71, histidine 72, histidine 156, and aspartate 177. The HXHXDH motif signature appears at 67–72 (HFHLDH). Glutamate 202 is an active-site residue. Histidine 425 lines the Zn(2+) pocket. A disordered region spans residues 626-669 (NNNTSDDNNNNNNNNNNNNNNNNNNNNNNNNNNNNNNNNNNNNN).

This sequence belongs to the metallo-beta-lactamase superfamily. RNA-metabolizing metallo-beta-lactamase-like family. INTS11 subfamily. As to quaternary structure, component of the Integrator complex. The core complex associates with protein phosphatase 2A subunits, to form the Integrator-PP2A (INTAC) complex. It depends on Zn(2+) as a cofactor.

The protein localises to the nucleus. It localises to the cytoplasm. Functionally, RNA endonuclease component of the integrator complex, a multiprotein complex that terminates RNA polymerase II (Pol II) transcription in the promoter-proximal region of genes. The integrator complex provides a quality checkpoint during transcription elongation by driving premature transcription termination of transcripts that are unfavorably configured for transcriptional elongation: the complex terminates transcription by (1) catalyzing dephosphorylation of the C-terminal domain (CTD) of Pol II subunit polr2a, (2) degrading the exiting nascent RNA transcript via endonuclease activity and (3) promoting the release of Pol II from bound DNA. The integrator complex is also involved in terminating the synthesis of non-coding Pol II transcripts, such as enhancer RNAs (eRNAs), small nuclear RNAs (snRNAs), telomerase RNAs and long non-coding RNAs (lncRNAs). Within the integrator complex, INTS11 constitutes the RNA endonuclease subunit that degrades exiting nascent RNA transcripts. In Dictyostelium discoideum (Social amoeba), this protein is Integrator complex subunit 11 homolog (ints11).